Here is a 235-residue protein sequence, read N- to C-terminus: Large ribosomal subunit protein uL1 (235 aa).

Belongs to the universal ribosomal protein uL1 family. In terms of assembly, part of the 50S ribosomal subunit.

Binds directly to 23S rRNA. The L1 stalk is quite mobile in the ribosome, and is involved in E site tRNA release. Its function is as follows. Protein L1 is also a translational repressor protein, it controls the translation of the L11 operon by binding to its mRNA. The polypeptide is Large ribosomal subunit protein uL1 (Prochlorococcus marinus (strain MIT 9303)).